Here is a 250-residue protein sequence, read N- to C-terminus: MKITPVKALTDNYIWMIQHGNHAVCVDPSEPSPVLEFLVRNRLMLAQTWVTHPHPDHEGGAAALWRGYMESPVYGESDIEAATHTVTAGTRFTFGNGQVTVWATPGHTDRHTSYLLETSDGIHVFCGDTLFSAGCGRVFTGTVEQLYDSFQRFNQLPEGTLFYPAHEYTAANLRFAAHIEPDNADIQTALKAAERTPTLPVTLAHERRVNPFLRTEIPAVRQRAEALVGKTLNSGLEVFAALRELKNAYR.

Positions 52, 54, 56, 57, 107, 128, and 166 each coordinate Zn(2+).

It belongs to the metallo-beta-lactamase superfamily. Glyoxalase II family. Monomer. Requires Zn(2+) as cofactor.

The enzyme catalyses an S-(2-hydroxyacyl)glutathione + H2O = a 2-hydroxy carboxylate + glutathione + H(+). The protein operates within secondary metabolite metabolism; methylglyoxal degradation; (R)-lactate from methylglyoxal: step 2/2. Functionally, thiolesterase that catalyzes the hydrolysis of S-D-lactoyl-glutathione to form glutathione and D-lactic acid. The protein is Hydroxyacylglutathione hydrolase of Neisseria gonorrhoeae (strain NCCP11945).